The primary structure comprises 488 residues: Probable malate:quinone oxidoreductase (488 aa).

This sequence belongs to the MQO family. FAD is required as a cofactor.

It carries out the reaction (S)-malate + a quinone = a quinol + oxaloacetate. It functions in the pathway carbohydrate metabolism; tricarboxylic acid cycle; oxaloacetate from (S)-malate (quinone route): step 1/1. This Neisseria gonorrhoeae (strain ATCC 700825 / FA 1090) protein is Probable malate:quinone oxidoreductase.